The primary structure comprises 402 residues: Multidrug resistance protein MdtH (402 aa).

Transmembrane regions (helical) follow at residues Tyr13 to Ile33, Ser34 to Leu54, Pro99 to Phe116, Ile139 to Leu159, Leu165 to Leu185, Val214 to Met234, Ala243 to Ile263, Leu277 to Leu297, Leu300 to Thr320, Leu340 to Gly360, and Pro369 to Ser389.

This sequence belongs to the major facilitator superfamily. DHA1 family. MdtH (TC 2.A.1.2.21) subfamily.

It localises to the cell inner membrane. The sequence is that of Multidrug resistance protein MdtH from Klebsiella pneumoniae subsp. pneumoniae (strain ATCC 700721 / MGH 78578).